We begin with the raw amino-acid sequence, 458 residues long: tRNA modification GTPase MnmE (458 aa).

Arg-22, Glu-86, and Arg-125 together coordinate (6S)-5-formyl-5,6,7,8-tetrahydrofolate. The TrmE-type G domain occupies 221–379; the sequence is GIRTVILGRP…LEQTITEMFF (159 aa). Position 231 (Asn-231) interacts with K(+). GTP is bound by residues 231 to 236, 250 to 256, and 275 to 278; these read NAGKSS, TEIAGTT, and DTAG. Ser-235 serves as a coordination point for Mg(2+). Thr-250, Ile-252, and Thr-255 together coordinate K(+). Thr-256 is a Mg(2+) binding site. Lys-458 provides a ligand contact to (6S)-5-formyl-5,6,7,8-tetrahydrofolate.

Belongs to the TRAFAC class TrmE-Era-EngA-EngB-Septin-like GTPase superfamily. TrmE GTPase family. Homodimer. Heterotetramer of two MnmE and two MnmG subunits. It depends on K(+) as a cofactor.

It is found in the cytoplasm. Its function is as follows. Exhibits a very high intrinsic GTPase hydrolysis rate. Involved in the addition of a carboxymethylaminomethyl (cmnm) group at the wobble position (U34) of certain tRNAs, forming tRNA-cmnm(5)s(2)U34. This is tRNA modification GTPase MnmE from Lachnoclostridium phytofermentans (strain ATCC 700394 / DSM 18823 / ISDg) (Clostridium phytofermentans).